Reading from the N-terminus, the 506-residue chain is Protein NEN3 (506 aa).

In terms of domain architecture, Exonuclease spans 15 to 176; that stretch reads FFDLETAVPT…LDDVRMNLEV (162 aa). Positions 17 and 19 each coordinate Mg(2+). His164 (proton donor/acceptor) is an active-site residue. Asp169 lines the Mg(2+) pocket. 2 disordered regions span residues 204–240 and 289–313; these read KSPR…SSVD and AEEA…KDES. Residues 222 to 238 are compositionally biased toward low complexity; it reads SSTSSSSSPKTDPSSSS. Residues 290–299 are compositionally biased toward basic and acidic residues; sequence EEAKTVRQQD.

It depends on Mg(2+) as a cofactor.

Functionally, probable exonuclease that may be involved in enuclation of sieve elements. The protein is Protein NEN3 (NEN3) of Arabidopsis thaliana (Mouse-ear cress).